Here is a 309-residue protein sequence, read N- to C-terminus: Serine/threonine-protein phosphatase 2A catalytic subunit beta isoform (309 aa).

Residues Asp-57, His-59, Asp-85, and Asn-117 each coordinate Mn(2+). Catalysis depends on His-118, which acts as the Proton donor. Residues His-167 and His-241 each contribute to the Mn(2+) site. Position 307 is a phosphotyrosine (Tyr-307). A Leucine methyl ester modification is found at Leu-309.

Belongs to the PPP phosphatase family. PP-1 subfamily. In terms of assembly, found in a complex with at least ARL2, PPP2CB, PPP2R1A, PPP2R2A, PPP2R5E and TBCD. Interacts with TBCD. PP2A consists of a common heterodimeric core enzyme (composed of a 36 kDa catalytic subunit (subunit C) and a 65 kDa constant regulatory subunit (PR65) (subunit A)) that associates with a variety of regulatory subunits. Proteins that associate with the core dimer include three families of regulatory subunits B (the R2/B/PR55/B55, R3/B''/PR72/PR130/PR59 and R5/B'/B56 families), the 48 kDa variable regulatory subunit, viral proteins, and cell signaling molecules. Binds PPME1. May indirectly interact with SGO1, most probably through regulatory B56 subunits. Interacts with CTTNBP2NL. Interacts with PTPA. Part of the core of STRIPAK complexes composed of PP2A catalytic and scaffolding subunits, the striatins (PP2A regulatory subunits), the striatin-associated proteins MOB4, STRIP1 and STRIP2, PDCD10 and members of the STE20 kinases, such as STK24 and STK26. Mn(2+) is required as a cofactor. In terms of processing, reversibly methyl esterified on Leu-309 by leucine carboxyl methyltransferase 1 (Lcmt1) and protein phosphatase methylesterase 1 (PPME1). Carboxyl methylation influences the affinity of the catalytic subunit for the different regulatory subunits, thereby modulating the PP2A holoenzyme's substrate specificity, enzyme activity and cellular localization. Phosphorylation of either threonine (by autophosphorylation-activated protein kinase) or tyrosine results in inactivation of the phosphatase. Auto-dephosphorylation has been suggested as a mechanism for reactivation. Post-translationally, may be monoubiquitinated by NOSIP.

The protein localises to the cytoplasm. The protein resides in the nucleus. It localises to the chromosome. Its subcellular location is the centromere. It is found in the cytoskeleton. The protein localises to the spindle pole. The catalysed reaction is O-phospho-L-seryl-[protein] + H2O = L-seryl-[protein] + phosphate. The enzyme catalyses O-phospho-L-threonyl-[protein] + H2O = L-threonyl-[protein] + phosphate. Functionally, catalytic subunit of protein phosphatase 2A (PP2A), a serine/threonine phosphatase involved in the regulation of a wide variety of enzymes, signal transduction pathways, and cellular events. PP2A can modulate the activity of phosphorylase B kinase, casein kinase 2, mitogen-stimulated S6 kinase, and MAP-2 kinase. Part of the striatin-interacting phosphatase and kinase (STRIPAK) complexes. STRIPAK complexes have critical roles in protein (de)phosphorylation and are regulators of multiple signaling pathways including Hippo, MAPK, nuclear receptor and cytoskeleton remodeling. Different types of STRIPAK complexes are involved in a variety of biological processes such as cell growth, differentiation, apoptosis, metabolism and immune regulation. The chain is Serine/threonine-protein phosphatase 2A catalytic subunit beta isoform (PPP2CB) from Oryctolagus cuniculus (Rabbit).